Reading from the N-terminus, the 516-residue chain is D-alanine--D-alanyl carrier protein ligase (516 aa).

156 to 157 is a binding site for ATP; the sequence is TS. Asp203 provides a ligand contact to D-alanine. 298-303 is a binding site for ATP; sequence NAYGPT. D-alanine is bound at residue Val307. ATP contacts are provided by residues Asp389, 401–404, and Lys503; that span reads YGGR. Lys503 provides a ligand contact to D-alanine.

Belongs to the ATP-dependent AMP-binding enzyme family. DltA subfamily.

It is found in the cytoplasm. The catalysed reaction is holo-[D-alanyl-carrier protein] + D-alanine + ATP = D-alanyl-[D-alanyl-carrier protein] + AMP + diphosphate. It participates in cell wall biogenesis; lipoteichoic acid biosynthesis. Catalyzes the first step in the D-alanylation of lipoteichoic acid (LTA), the activation of D-alanine and its transfer onto the D-alanyl carrier protein (Dcp) DltC. In an ATP-dependent two-step reaction, forms a high energy D-alanyl-AMP intermediate, followed by transfer of the D-alanyl residue as a thiol ester to the phosphopantheinyl prosthetic group of the Dcp. D-alanylation of LTA plays an important role in modulating the properties of the cell wall in Gram-positive bacteria, influencing the net charge of the cell wall. In Streptococcus pneumoniae (strain 70585), this protein is D-alanine--D-alanyl carrier protein ligase.